Here is a 103-residue protein sequence, read N- to C-terminus: Small ribosomal subunit protein uS10 (103 aa).

This sequence belongs to the universal ribosomal protein uS10 family. As to quaternary structure, part of the 30S ribosomal subunit.

Functionally, involved in the binding of tRNA to the ribosomes. The polypeptide is Small ribosomal subunit protein uS10 (Neorickettsia sennetsu (strain ATCC VR-367 / Miyayama) (Ehrlichia sennetsu)).